A 362-amino-acid polypeptide reads, in one-letter code: Glutamate 5-kinase (362 aa).

Position 3 (lysine 3) interacts with ATP. The substrate site is built by serine 43, aspartate 128, and asparagine 140. Residues 160–161 (TD) and 202–208 (TGGMRTK) each bind ATP. Residues 267 to 348 (AGAILVDAGA…REIENVLGYS (82 aa)) form the PUA domain.

Belongs to the glutamate 5-kinase family.

It localises to the cytoplasm. It carries out the reaction L-glutamate + ATP = L-glutamyl 5-phosphate + ADP. It participates in amino-acid biosynthesis; L-proline biosynthesis; L-glutamate 5-semialdehyde from L-glutamate: step 1/2. In terms of biological role, catalyzes the transfer of a phosphate group to glutamate to form L-glutamate 5-phosphate. In Xanthomonas oryzae pv. oryzae (strain KACC10331 / KXO85), this protein is Glutamate 5-kinase.